Reading from the N-terminus, the 297-residue chain is Lipoyl synthase (297 aa).

[4Fe-4S] cluster-binding residues include Cys34, Cys39, Cys45, Cys60, Cys64, Cys67, and Ser273. A Radical SAM core domain is found at 46 to 262; that stretch reads WNKRHATVMI…KYVAYSKGFL (217 aa).

This sequence belongs to the radical SAM superfamily. Lipoyl synthase family. It depends on [4Fe-4S] cluster as a cofactor.

It localises to the cytoplasm. The enzyme catalyses [[Fe-S] cluster scaffold protein carrying a second [4Fe-4S](2+) cluster] + N(6)-octanoyl-L-lysyl-[protein] + 2 oxidized [2Fe-2S]-[ferredoxin] + 2 S-adenosyl-L-methionine + 4 H(+) = [[Fe-S] cluster scaffold protein] + N(6)-[(R)-dihydrolipoyl]-L-lysyl-[protein] + 4 Fe(3+) + 2 hydrogen sulfide + 2 5'-deoxyadenosine + 2 L-methionine + 2 reduced [2Fe-2S]-[ferredoxin]. It participates in protein modification; protein lipoylation via endogenous pathway; protein N(6)-(lipoyl)lysine from octanoyl-[acyl-carrier-protein]: step 2/2. Its function is as follows. Catalyzes the radical-mediated insertion of two sulfur atoms into the C-6 and C-8 positions of the octanoyl moiety bound to the lipoyl domains of lipoate-dependent enzymes, thereby converting the octanoylated domains into lipoylated derivatives. This is Lipoyl synthase from Ehrlichia chaffeensis (strain ATCC CRL-10679 / Arkansas).